A 188-amino-acid polypeptide reads, in one-letter code: MAADLNTLKQDLTRRMDGALETLRREFAGLRAGRASPALLEPVRVDAYGSEVPLTQVGNIGVPESRMLTVQVWDRSLVSAVEKAIRDCGLGLNPQTEGQLIRVPLPMLTEERRNELAKAAGRYAESTRVAIRAVRRDGMDQIKGHEKKSEIGEDEAKTWSDEVQKLTDHYIKRVDDALVEKEKDIRQV.

It belongs to the RRF family.

Its subcellular location is the cytoplasm. In terms of biological role, responsible for the release of ribosomes from messenger RNA at the termination of protein biosynthesis. May increase the efficiency of translation by recycling ribosomes from one round of translation to another. The chain is Ribosome-recycling factor from Granulibacter bethesdensis (strain ATCC BAA-1260 / CGDNIH1).